The chain runs to 483 residues: MVSSTKLKSVDFYRKIPRDLTEASLSGAGLSIVAALFMMFLFGMELSSYLEVNTTTAVIVDKSSDGDFLRIDFNISFPALSCEFASVDVSDVLGTNRLNITKTVRKFPIDPHLRSTGAEFHSGLALHNINHGEETKEEFPDGAIPLTSASFEALSHHFPILVVNFNAPWCYWSNRLKPSWEKAANIIKQRYDPEADGRVLLGNVDCTEEPALCKRNHIQGYPSIRIFRKGSDLREDHGHHEHESYYGDRDTDSIVKMVEGLVAPIHPETHKVALDGKSNDTVKHLKKGPVTGGCRVEGYVRVKKVPGNLVISAHSGAHSFDSSQMNMSHVVSHFSFGRMISPRLLTDMKRLLPYLGLSHDRLDGKAFINQHEFGANVTIEHYLQTVKTEVITRRSGQEHSLIEEYEYTAHSSVAQTYYLPVAKFHFELSPMQILITENPKSFSHFITNLCAIIGGVFTVAGILDSIFHNTVRLVKKVELGKNI.

N-linked (GlcNAc...) asparagine glycans are attached at residues Asn53, Asn74, and Asn99. Positions Glu133–Ala263 constitute a Thioredoxin domain. Cys170 serves as the catalytic Nucleophile. Residues Asn279, Asn326, and Asn376 are each glycosylated (N-linked (GlcNAc...) asparagine). The helical transmembrane segment at Phe442–Ile462 threads the bilayer.

It belongs to the protein disulfide isomerase family. Widely expressed.

It is found in the membrane. In terms of biological role, acts as a protein-folding catalyst that interacts with nascent polypeptides to catalyze the formation, isomerization, and reduction or oxidation of disulfide bonds. The polypeptide is Protein disulfide-isomerase 5-3 (PDIL5-3) (Arabidopsis thaliana (Mouse-ear cress)).